Here is a 495-residue protein sequence, read N- to C-terminus: UDP-N-acetylmuramoyl-L-alanyl-D-glutamate--2,6-diaminopimelate ligase (495 aa).

UDP-N-acetyl-alpha-D-muramoyl-L-alanyl-D-glutamate is bound by residues Leu27, Ser29, and 44 to 46; that span reads HQT. 116–122 provides a ligand contact to ATP; it reads GTNGKTT. UDP-N-acetyl-alpha-D-muramoyl-L-alanyl-D-glutamate contacts are provided by residues Asn157, 158–159, Ser185, Gln191, and Arg193; that span reads TT. Lys225 carries the N6-carboxylysine modification. Residues Arg390, 414–417, Gly465, and Glu469 each bind meso-2,6-diaminopimelate; that span reads DNPR. The short motif at 414–417 is the Meso-diaminopimelate recognition motif element; the sequence is DNPR.

This sequence belongs to the MurCDEF family. MurE subfamily. Mg(2+) is required as a cofactor. In terms of processing, carboxylation is probably crucial for Mg(2+) binding and, consequently, for the gamma-phosphate positioning of ATP.

It localises to the cytoplasm. It catalyses the reaction UDP-N-acetyl-alpha-D-muramoyl-L-alanyl-D-glutamate + meso-2,6-diaminopimelate + ATP = UDP-N-acetyl-alpha-D-muramoyl-L-alanyl-gamma-D-glutamyl-meso-2,6-diaminopimelate + ADP + phosphate + H(+). Its pathway is cell wall biogenesis; peptidoglycan biosynthesis. Catalyzes the addition of meso-diaminopimelic acid to the nucleotide precursor UDP-N-acetylmuramoyl-L-alanyl-D-glutamate (UMAG) in the biosynthesis of bacterial cell-wall peptidoglycan. The protein is UDP-N-acetylmuramoyl-L-alanyl-D-glutamate--2,6-diaminopimelate ligase of Photorhabdus laumondii subsp. laumondii (strain DSM 15139 / CIP 105565 / TT01) (Photorhabdus luminescens subsp. laumondii).